A 148-amino-acid chain; its full sequence is Single-stranded DNA-binding protein 1-B, mitochondrial (148 aa).

The transit peptide at 1-17 (MFHRPVLQVFRQFARCQ) directs the protein to the mitochondrion. Positions 30–142 (MNKVQLLGRV…IIADNIIFLT (113 aa)) constitute an SSB domain.

As to quaternary structure, homotetramer.

It localises to the mitochondrion. The protein resides in the mitochondrion matrix. It is found in the mitochondrion nucleoid. Binds preferentially and cooperatively to pyrimidine rich single-stranded DNA (ss-DNA). Required to maintain the copy number of mitochondrial DNA (mtDNA) and plays crucial roles during mtDNA replication that stimulate activity of the DNA polymerase at the replication fork. May also function in mtDNA repair. The polypeptide is Single-stranded DNA-binding protein 1-B, mitochondrial (ssbp1-b) (Xenopus laevis (African clawed frog)).